We begin with the raw amino-acid sequence, 348 residues long: Ileal sodium/bile acid cotransporter (348 aa).

Residues 1 to 28 (MDNSSVCPPNATVCEGDSCVVPESNFNA) lie on the Extracellular side of the membrane. N-linked (GlcNAc...) asparagine glycosylation is found at Asn-3 and Asn-10. Residues 29 to 49 (ILNTVMSTVLTILLAMVMFSM) traverse the membrane as a helical segment. At 50 to 87 (GCNVEVHKFLGHIKRPWGIFVGFLCQFGIMPLTGFILS) the chain is on the cytoplasmic side. The helical transmembrane segment at 88 to 108 (VASGILPVQAVVVLIMGCCPG) threads the bilayer. Residues 109 to 126 (GTGSNILAYWIDGDMDLS) lie on the Extracellular side of the membrane. Residues 127–147 (VSMTTCSTLLALGMMPLCLFV) traverse the membrane as a helical segment. The Cytoplasmic segment spans residues 148–157 (YTKMWVDSGT). The helical transmembrane segment at 158 to 178 (IVIPYDSIGISLVALVIPVSF) threads the bilayer. Residues 179–195 (GMFVNHKWPQKAKIILK) are Extracellular-facing. The helical transmembrane segment at 196–216 (IGSITGVILIVLIAVIGGILY) threads the bilayer. At 217–224 (QSAWIIEP) the chain is on the cytoplasmic side. The helical transmembrane segment at 225 to 245 (KLWIIGTIFPIAGYSLGFFLA) threads the bilayer. Over 246–284 (RLAGQPWYRCRTVALETGMQNTQLCSTIVQLSFSPEDLN) the chain is Extracellular. Residues 285–305 (LVFTFPLIYTVFQLVFAAVIL) traverse the membrane as a helical segment. Residues 306-348 (GIYVTYRKCYGKNDAEFLEKTDNEMDSRPSFDETNKGFQPDEK) are Cytoplasmic-facing. Positions 328–348 (NEMDSRPSFDETNKGFQPDEK) are disordered. Ser-335 carries the phosphoserine modification.

This sequence belongs to the bile acid:sodium symporter (BASS) (TC 2.A.28) family. In terms of assembly, monomer and homodimer. Expressed in ileum.

The protein localises to the membrane. It carries out the reaction taurocholate(out) + 2 Na(+)(out) = taurocholate(in) + 2 Na(+)(in). The catalysed reaction is cholate(out) + 2 Na(+)(out) = cholate(in) + 2 Na(+)(in). It catalyses the reaction taurochenodeoxycholate(out) + 2 Na(+)(out) = taurochenodeoxycholate(in) + 2 Na(+)(in). The enzyme catalyses tauroursodeoxycholate(out) + 2 Na(+)(out) = tauroursodeoxycholate(in) + 2 Na(+)(in). It carries out the reaction glycocholate(out) + 2 Na(+)(out) = glycocholate(in) + 2 Na(+)(in). The catalysed reaction is tauronorcholate(out) + 2 Na(+)(out) = tauronorcholate(in) + 2 Na(+)(in). It catalyses the reaction tauroallocholate(out) + 2 Na(+)(out) = tauroallocholate(in) + 2 Na(+)(in). The enzyme catalyses taurodeoxycholate(out) + 2 Na(+)(out) = taurodeoxycholate(in) + 2 Na(+)(in). It carries out the reaction tauro-beta-muricholate(out) + 2 Na(+)(out) = tauro-beta-muricholate(in) + 2 Na(+)(in). Functionally, plays a critical role in the sodium-dependent reabsorption of bile acids from the lumen of the small intestine. Transports various bile acids, unconjugated or conjugated, such as cholate and taurocholate. Also responsible for bile acid transport in the renal proximal tubules, a salvage mechanism that helps conserve bile acids. Works collaboratively with the Na(+)-taurocholate cotransporting polypeptide (NTCP), the organic solute transporter (OST), and the bile salt export pump (BSEP), to ensure efficacious biological recycling of bile acids during enterohepatic circulation. In Mus musculus (Mouse), this protein is Ileal sodium/bile acid cotransporter (Slc10a2).